We begin with the raw amino-acid sequence, 831 residues long: V-type proton ATPase subunit a (831 aa).

At 1–418 (MSPSLFRSEE…DSYGIATYRE (418 aa)) the chain is on the cytoplasmic side. The helical transmembrane segment at 419–437 (VNHGIVAIVTFPFLFAIMF) threads the bilayer. Topologically, residues 438–439 (GD) are vacuolar. The chain crosses the membrane as a helical span at residues 440 to 456 (LGHGAIMASVALMFVLY). Residues 457 to 471 (EKTLGAKKDLDEIVG) lie on the Cytoplasmic side of the membrane. A helical membrane pass occupies residues 472-501 (MVFYGRYIVLLMGLFSMYVGFVYNDLFSKP). Topologically, residues 502–548 (MSIFSSRWVWPVKSEEAIARAVQVGTYPIGIDPTWHSADNNLLFMNS) are vacuolar. A helical transmembrane segment spans residues 549–568 (YKMKLSIILGVIHMTFCLFL). Over 569-586 (SLSNYRFFKRKLDIYAVF) the chain is Cytoplasmic. The helical transmembrane segment at 587 to 607 (VPSLIFLEAIFGYLVITIVYK) threads the bilayer. The Vacuolar portion of the chain corresponds to 608–650 (WCIDWKAKDLQPPSLLNMLILMFLSPGTLEDQLYPGQKYLQVG). Residues 651–670 (LVIAALICVPWLLIVKPFVL) traverse the membrane as a helical segment. Residues 671 to 723 (WRRHSNEENKYQSLNSDLPNVDEADALMAVDSQEKQAEPFELGEVVIHQVIHT) are Cytoplasmic-facing. A helical membrane pass occupies residues 724 to 748 (IEFCLGCVSHTASYLRLWALSLAHN). Residues 749–769 (QLSSVLWNMTLANGFRMTGIV) lie on the Vacuolar side of the membrane. A helical membrane pass occupies residues 770–808 (GSIFVVILFGFWFIATCVVLVAMEGTSAMLHSLRLHWVE). Residues 809–831 (GMSKHFEGEGYAFTPFTFKVTAE) are Cytoplasmic-facing.

It belongs to the V-ATPase 116 kDa subunit family. As to quaternary structure, V-ATPase is a heteromultimeric enzyme composed of a peripheral catalytic V1 complex (components A to H) attached to an integral membrane V0 proton pore complex (components: a, c, c', c'', d, e, f and VOA1).

It localises to the vacuole membrane. Its function is as follows. Subunit of the V0 complex of vacuolar(H+)-ATPase (V-ATPase), a multisubunit enzyme composed of a peripheral complex (V1) that hydrolyzes ATP and a membrane integral complex (V0) that translocates protons. V-ATPase is responsible for acidifying and maintaining the pH of intracellular compartments. The sequence is that of V-type proton ATPase subunit a (vph1) from Schizosaccharomyces pombe (strain 972 / ATCC 24843) (Fission yeast).